The primary structure comprises 274 residues: MGTLSVNQNKLQKRLRRLAGEAVTDFNMIEEGDKVMVCLSGGKDSYTMLDVLLYLQKVAPIGFEIVAVNMDQKQPGFPEEVLPTYLKSIGVDYHIIEKDTYSVVKEKIPEGKTTCSLCSRLRRGTLYTFADRIGATKMALGHHRDDILETFFLNLFYGGTLKAMPPKLLSDDGRNVVIRPLAYCSETDIEAYAKLKEFPIIPCNLCGSQENLQRQVVKEMLREWERQSPGRTEIMFRALQNVHPSQLADRKLFDFAGLRIDDSAAPRFVDAVNL.

The PP-loop motif signature appears at 40 to 45 (SGGKDS). Residues Cys-115, Cys-118, and Cys-206 each coordinate [4Fe-4S] cluster.

It belongs to the TtcA family. In terms of assembly, homodimer. It depends on Mg(2+) as a cofactor. Requires [4Fe-4S] cluster as cofactor.

Its subcellular location is the cytoplasm. It carries out the reaction cytidine(32) in tRNA + S-sulfanyl-L-cysteinyl-[cysteine desulfurase] + AH2 + ATP = 2-thiocytidine(32) in tRNA + L-cysteinyl-[cysteine desulfurase] + A + AMP + diphosphate + H(+). The protein operates within tRNA modification. Catalyzes the ATP-dependent 2-thiolation of cytidine in position 32 of tRNA, to form 2-thiocytidine (s(2)C32). The sulfur atoms are provided by the cysteine/cysteine desulfurase (IscS) system. In Azotobacter vinelandii (strain DJ / ATCC BAA-1303), this protein is tRNA-cytidine(32) 2-sulfurtransferase.